A 463-amino-acid polypeptide reads, in one-letter code: Argininosuccinate lyase (463 aa).

Belongs to the lyase 1 family. Argininosuccinate lyase subfamily.

The protein localises to the cytoplasm. The catalysed reaction is 2-(N(omega)-L-arginino)succinate = fumarate + L-arginine. The protein operates within amino-acid biosynthesis; L-arginine biosynthesis; L-arginine from L-ornithine and carbamoyl phosphate: step 3/3. This chain is Argininosuccinate lyase, found in Thermosynechococcus vestitus (strain NIES-2133 / IAM M-273 / BP-1).